The following is a 228-amino-acid chain: Urease accessory protein UreF (228 aa).

It belongs to the UreF family. UreD, UreF and UreG form a complex that acts as a GTP-hydrolysis-dependent molecular chaperone, activating the urease apoprotein by helping to assemble the nickel containing metallocenter of UreC. The UreE protein probably delivers the nickel.

The protein localises to the cytoplasm. In terms of biological role, required for maturation of urease via the functional incorporation of the urease nickel metallocenter. The chain is Urease accessory protein UreF from Prochlorococcus marinus (strain AS9601).